The primary structure comprises 163 residues: NADH-quinone oxidoreductase subunit I (163 aa).

4Fe-4S ferredoxin-type domains lie at 53–83 (LRRY…IEAG) and 94–123 (VRYD…EGPN). Positions 63, 66, 69, 73, 103, 106, 109, and 113 each coordinate [4Fe-4S] cluster.

The protein belongs to the complex I 23 kDa subunit family. As to quaternary structure, NDH-1 is composed of 14 different subunits. Subunits NuoA, H, J, K, L, M, N constitute the membrane sector of the complex. It depends on [4Fe-4S] cluster as a cofactor.

The protein localises to the cell inner membrane. It catalyses the reaction a quinone + NADH + 5 H(+)(in) = a quinol + NAD(+) + 4 H(+)(out). In terms of biological role, NDH-1 shuttles electrons from NADH, via FMN and iron-sulfur (Fe-S) centers, to quinones in the respiratory chain. The immediate electron acceptor for the enzyme in this species is believed to be ubiquinone. Couples the redox reaction to proton translocation (for every two electrons transferred, four hydrogen ions are translocated across the cytoplasmic membrane), and thus conserves the redox energy in a proton gradient. The chain is NADH-quinone oxidoreductase subunit I from Brucella suis (strain ATCC 23445 / NCTC 10510).